Reading from the N-terminus, the 378-residue chain is Spermidine/putrescine import ATP-binding protein PotA (378 aa).

An ABC transporter domain is found at 18–248 (VQLAGIRKCF…PKNLFVTGFI (231 aa)). 50–57 (GPSGCGKT) contributes to the ATP binding site.

The protein belongs to the ABC transporter superfamily. Spermidine/putrescine importer (TC 3.A.1.11.1) family. As to quaternary structure, the complex is composed of two ATP-binding proteins (PotA), two transmembrane proteins (PotB and PotC) and a solute-binding protein (PotD).

It localises to the cell inner membrane. It catalyses the reaction ATP + H2O + polyamine-[polyamine-binding protein]Side 1 = ADP + phosphate + polyamineSide 2 + [polyamine-binding protein]Side 1.. In terms of biological role, part of the ABC transporter complex PotABCD involved in spermidine/putrescine import. Responsible for energy coupling to the transport system. The chain is Spermidine/putrescine import ATP-binding protein PotA from Shigella flexneri serotype 5b (strain 8401).